Consider the following 119-residue polypeptide: uncharacterized protein (119 aa).

Residues 6-36 (QAYLDIQGKIAEFRREIKALRVEEKAITANL) adopt a coiled-coil conformation. Residues 95–119 (AVTGSSSNVKIRKSAPARNEEDDDG) are disordered.

This is an uncharacterized protein from Frog virus 3 (isolate Goorha) (FV-3).